The following is a 214-amino-acid chain: Redox-sensing transcriptional repressor Rex (214 aa).

Residues 17–56 constitute a DNA-binding region (H-T-H motif); it reads LYYRIFKRFYADQVEKASSKQIADAMGIDSATVRRDFSYF. 91-96 provides a ligand contact to NAD(+); it reads GCGNIG.

Belongs to the transcriptional regulatory Rex family. As to quaternary structure, homodimer.

It is found in the cytoplasm. Functionally, modulates transcription in response to changes in cellular NADH/NAD(+) redox state. The sequence is that of Redox-sensing transcriptional repressor Rex from Streptococcus equi subsp. zooepidemicus (strain H70).